A 336-amino-acid polypeptide reads, in one-letter code: Large ribosomal subunit protein uL3 (336 aa).

Disordered stretches follow at residues 1-43 (MPQP…QGFA), 205-230 (ITKG…HARQ), and 311-336 (RPAV…SNQG). Residues 219 to 230 (GVQKRKGKHARQ) are compositionally biased toward basic residues.

This sequence belongs to the universal ribosomal protein uL3 family. Part of the 50S ribosomal subunit. Forms a cluster with proteins L14 and L24e.

Functionally, one of the primary rRNA binding proteins, it binds directly near the 3'-end of the 23S rRNA, where it nucleates assembly of the 50S subunit. The sequence is that of Large ribosomal subunit protein uL3 from Natronomonas pharaonis (strain ATCC 35678 / DSM 2160 / CIP 103997 / JCM 8858 / NBRC 14720 / NCIMB 2260 / Gabara) (Halobacterium pharaonis).